Consider the following 318-residue polypeptide: HPr kinase/phosphorylase (318 aa).

Catalysis depends on residues His146 and Lys167. 161-168 provides a ligand contact to ATP; the sequence is GESGLGKS. Ser168 lines the Mg(2+) pocket. Catalysis depends on Asp185, which acts as the Proton acceptor; for phosphorylation activity. Proton donor; for dephosphorylation activity. The segment at 209-218 is important for the catalytic mechanism of both phosphorylation and dephosphorylation; sequence LEVRGIGLLD. Glu210 is a Mg(2+) binding site. Arg252 is a catalytic residue. Residues 273–278 are important for the catalytic mechanism of dephosphorylation; that stretch reads QVVAGR.

It belongs to the HPrK/P family. Homohexamer. It depends on Mg(2+) as a cofactor.

It carries out the reaction [HPr protein]-L-serine + ATP = [HPr protein]-O-phospho-L-serine + ADP + H(+). The catalysed reaction is [HPr protein]-O-phospho-L-serine + phosphate + H(+) = [HPr protein]-L-serine + diphosphate. Functionally, catalyzes the ATP- as well as the pyrophosphate-dependent phosphorylation of a specific serine residue in HPr, a phosphocarrier protein of the phosphoenolpyruvate-dependent sugar phosphotransferase system (PTS). HprK/P also catalyzes the pyrophosphate-producing, inorganic phosphate-dependent dephosphorylation (phosphorolysis) of seryl-phosphorylated HPr (P-Ser-HPr). The chain is HPr kinase/phosphorylase from Verminephrobacter eiseniae (strain EF01-2).